Here is a 205-residue protein sequence, read N- to C-terminus: Small ribosomal subunit protein uS4 (205 aa).

One can recognise an S4 RNA-binding domain in the interval 103–173 (RRLQTIVMKK…LEKSKRAEAA (71 aa)). The segment at 174–205 (AREAAAEAAEAEQAAAQAAAPTPAPAAAAPKQ) is disordered. Residues 179 to 205 (AEAAEAEQAAAQAAAPTPAPAAAAPKQ) are compositionally biased toward low complexity.

It belongs to the universal ribosomal protein uS4 family. As to quaternary structure, part of the 30S ribosomal subunit. Contacts protein S5. The interaction surface between S4 and S5 is involved in control of translational fidelity.

Functionally, one of the primary rRNA binding proteins, it binds directly to 16S rRNA where it nucleates assembly of the body of the 30S subunit. Its function is as follows. With S5 and S12 plays an important role in translational accuracy. This chain is Small ribosomal subunit protein uS4, found in Cenarchaeum symbiosum (strain A).